The sequence spans 261 residues: RING finger protein 208 (261 aa).

A disordered region spans residues 83–106 (PALEGAPHTPPLPRRPRKGSSELG). Phosphoserine is present on serine 102. The RING-type zinc finger occupies 143 to 190 (CPTCGHSYNVTQRRPRVLSCLHSVCEQCLQILYESCPKYKFISCPTCR).

This is RING finger protein 208 (RNF208) from Homo sapiens (Human).